A 78-amino-acid chain; its full sequence is MATLIEVRDLLALSGRMDAQRISEQLATPMPLVNAMLSRLEAMGKAERQEEWLSGCLSGSCRHCPEGKACRKEVWQLR.

4 residues coordinate iron-sulfur cluster: C56, C61, C64, and C70.

The protein belongs to the FeoC family.

In terms of biological role, may function as a transcriptional regulator that controls feoABC expression. The chain is Probable [Fe-S]-dependent transcriptional repressor from Cronobacter sakazakii (strain ATCC BAA-894) (Enterobacter sakazakii).